The chain runs to 904 residues: Exo-beta-D-glucosaminidase (904 aa).

A signal peptide spans 1-32; the sequence is MFHRPASVRRFVTTAVALGLLSTLSTGARAGA. The interval 28–49 is disordered; the sequence is ARAGARTHEPPPRPTTVSSTAG. The active-site Proton donor is the Asp476. Glu545 serves as the catalytic Nucleophile. A compositionally biased stretch (low complexity) spans 813 to 828; sequence STTAGTDGASTTTVTV. The tract at residues 813 to 833 is disordered; that stretch reads STTAGTDGASTTTVTVRNTGS.

This sequence belongs to the glycosyl hydrolase 2 family. Monomer.

The protein localises to the secreted. The catalysed reaction is Hydrolysis of chitosan or chitosan oligosaccharides to remove successive D-glucosamine residues from the non-reducing termini.. Its function is as follows. Hydrolyzes chitosan and chitooligosaccharides with retention of anomeric configuration. Has no beta-mannosidase activity. This Streptomyces avermitilis (strain ATCC 31267 / DSM 46492 / JCM 5070 / NBRC 14893 / NCIMB 12804 / NRRL 8165 / MA-4680) protein is Exo-beta-D-glucosaminidase.